A 649-amino-acid polypeptide reads, in one-letter code: Macrolide export ATP-binding/permease protein MacB (649 aa).

The ABC transporter domain occupies 7–245 (IELKNIVRRY…SSAQEVTPQL (239 aa)). 43-50 (GASGSGKS) contacts ATP. 4 helical membrane passes run 276-296 (LLTM…IALG), 529-549 (IAFI…LVSV), 582-602 (LLGG…FSAF), and 612-632 (FSSF…FGYF).

The protein belongs to the ABC transporter superfamily. Macrolide exporter (TC 3.A.1.122) family. As to quaternary structure, homodimer. Part of the tripartite efflux system MacAB-TolC, which is composed of an inner membrane transporter, MacB, a periplasmic membrane fusion protein, MacA, and an outer membrane component, TolC. The complex forms a large protein conduit and can translocate molecules across both the inner and outer membranes. Interacts with MacA.

The protein resides in the cell inner membrane. Functionally, part of the tripartite efflux system MacAB-TolC. MacB is a non-canonical ABC transporter that contains transmembrane domains (TMD), which form a pore in the inner membrane, and an ATP-binding domain (NBD), which is responsible for energy generation. Confers resistance against macrolides. This Pasteurella multocida (strain Pm70) protein is Macrolide export ATP-binding/permease protein MacB.